The following is a 259-amino-acid chain: MAAAPLSYEIRLARDAQEIRASQRLRYAVFVEELGGAGPLIDHENRLEADEFDPLYDHLVLIDATKPEEDLDRVVAAYRLLRSDRAAEIGRFYCDAEYDLTPLRASGRRLLELGRSCVHPDHRGGAAMLMLWNALADYVLAHEIEILFGVASFHGTDVAALQQPLAWLHHHHLAPEGLRPRARQFQRMDLVAKEALDRRAALDAMPNLIKAYLRLGGFVGEGAFVDRPFNTTDVMLLMDTQAMSEKHREFYTRRVEGRG.

It belongs to the acetyltransferase family. OlsB subfamily.

It carries out the reaction a (3R)-hydroxyacyl-[ACP] + L-ornithine = a lyso-ornithine lipid + holo-[ACP] + H(+). The protein operates within lipid metabolism. In terms of biological role, catalyzes the first step in the biosynthesis of ornithine lipids, which are phosphorus-free membrane lipids. Catalyzes the 3-hydroxyacyl-acyl carrier protein-dependent acylation of ornithine to form lyso-ornithine lipid (LOL). In Rhodobacter capsulatus (strain ATCC BAA-309 / NBRC 16581 / SB1003), this protein is L-ornithine N(alpha)-acyltransferase.